A 173-amino-acid polypeptide reads, in one-letter code: Small ribosomal subunit protein uS5 (173 aa).

One can recognise an S5 DRBM domain in the interval 17–80 (WQERVIQIRR…ADGKKQLIDV (64 aa)).

This sequence belongs to the universal ribosomal protein uS5 family. As to quaternary structure, part of the 30S ribosomal subunit. Contacts proteins S4 and S8.

Its function is as follows. With S4 and S12 plays an important role in translational accuracy. In terms of biological role, located at the back of the 30S subunit body where it stabilizes the conformation of the head with respect to the body. The chain is Small ribosomal subunit protein uS5 from Rippkaea orientalis (strain PCC 8801 / RF-1) (Cyanothece sp. (strain PCC 8801)).